The sequence spans 443 residues: ATP-dependent protease ATPase subunit HslU (443 aa).

Residues Ile18, 60–65 (GVGKTE), Asp256, Glu321, and Arg393 contribute to the ATP site.

This sequence belongs to the ClpX chaperone family. HslU subfamily. As to quaternary structure, a double ring-shaped homohexamer of HslV is capped on each side by a ring-shaped HslU homohexamer. The assembly of the HslU/HslV complex is dependent on binding of ATP.

The protein localises to the cytoplasm. Functionally, ATPase subunit of a proteasome-like degradation complex; this subunit has chaperone activity. The binding of ATP and its subsequent hydrolysis by HslU are essential for unfolding of protein substrates subsequently hydrolyzed by HslV. HslU recognizes the N-terminal part of its protein substrates and unfolds these before they are guided to HslV for hydrolysis. This is ATP-dependent protease ATPase subunit HslU from Shigella boydii serotype 18 (strain CDC 3083-94 / BS512).